A 454-amino-acid chain; its full sequence is GTPase Der (454 aa).

2 EngA-type G domains span residues 4–167 (AIVA…SEDK) and 188–363 (LQLA…ASWQ). GTP is bound by residues 10-17 (GKPNVGKS), 56-60 (DTPGL), 121-124 (NKTE), 194-201 (GRPNCGKS), 241-245 (DTAGV), and 306-309 (NKCD). The region spanning 364–450 (KRVTTGTLNQ…PVRLSFVKGK (87 aa)) is the KH-like domain.

The protein belongs to the TRAFAC class TrmE-Era-EngA-EngB-Septin-like GTPase superfamily. EngA (Der) GTPase family. Associates with the 50S ribosomal subunit.

In terms of biological role, GTPase that plays an essential role in the late steps of ribosome biogenesis. The sequence is that of GTPase Der from Orientia tsutsugamushi (strain Boryong) (Rickettsia tsutsugamushi).